A 264-amino-acid polypeptide reads, in one-letter code: Glutamate racemase (264 aa).

Substrate-binding positions include 12–13 and 44–45; these read DS and YG. Catalysis depends on Cys76, which acts as the Proton donor/acceptor. 77-78 is a binding site for substrate; it reads NT. Residue Cys186 is the Proton donor/acceptor of the active site. Position 187–188 (187–188) interacts with substrate; it reads TH.

It belongs to the aspartate/glutamate racemases family.

The enzyme catalyses L-glutamate = D-glutamate. It functions in the pathway cell wall biogenesis; peptidoglycan biosynthesis. Its function is as follows. Provides the (R)-glutamate required for cell wall biosynthesis. This chain is Glutamate racemase, found in Fusobacterium nucleatum subsp. nucleatum (strain ATCC 25586 / DSM 15643 / BCRC 10681 / CIP 101130 / JCM 8532 / KCTC 2640 / LMG 13131 / VPI 4355).